Reading from the N-terminus, the 506-residue chain is Cytochrome P450 monooxygenase BOA3 (506 aa).

A helical transmembrane segment spans residues 15–35 (IYLWIGFVLVVLLAYPTYFAI). Residue Cys451 participates in heme binding.

The protein belongs to the cytochrome P450 family. The cofactor is heme.

It localises to the membrane. The protein operates within polyketide biosynthesis. Its function is as follows. Cytochrome P450 monooxygenase; part of the gene cluster A that mediates the biosynthesis of botcinic acid and its botcinin derivatives, acetate-derived polyketides that contribute to virulence when combined with the sesquiterpene botrydial. Botcinic acid and its derivatives have been shown to induce chlorosis and necrosis during host plant infection, but also have antifungal activities. Two polyketide synthases, BOA6 and BOA9, are involved in the biosynthesis of botcinins. BOA6 mediates the formation of the per-methylated tetraketide core by condensation of four units of malonyl-CoA with one unit of acetyl-CoA, which would be methylated in activated methylene groups to yield a bicyclic acid intermediate that could then either be converted to botrylactone derivatives or lose the starter acetate unit through a retro-Claisen type C-C bond cleavage to yield botcinin derivatives. The second polyketide synthase, BOA9, is probably required for the biosynthesis of the tetraketide side chain of botcinins. The methyltransferase (MT) domain within BOA6 is probably responsible for the incorporation of four methyl groups. The trans-enoyl reductase BOA5 might take over the enoyl reductase function of BOA6 that misses an ER domain. The monooxygenases BOA2, BOA3 and BOA4 might be involved in further hydroxylations at C4, C5 and C8, whereas BOA7, close to BOA9, could potentially be involved in the hydroxylation at C4 in the side chain of botcinins. The sequence is that of Cytochrome P450 monooxygenase BOA3 from Botryotinia fuckeliana (strain B05.10) (Noble rot fungus).